Consider the following 373-residue polypeptide: Ubiquitin domain-containing protein DSK2 (373 aa).

The Ubiquitin-like domain occupies 1–76 (MSLNIHIKSG…SVHLVKSQPK (76 aa)). Glycyl lysine isopeptide (Lys-Gly) (interchain with G-Cter in ubiquitin) cross-links involve residues Lys-13 and Lys-76. Residues 221 to 270 (DPNAGMGSAGGAASAFPAPGGDAPEEGSNTNTTSSSNTGNNAGTNAGTNA) are disordered. Positions 231 to 270 (GAASAFPAPGGDAPEEGSNTNTTSSSNTGNNAGTNAGTNA) are enriched in low complexity. In terms of domain architecture, UBA spans 327–371 (PPEERYEHQLRQLNDMGFFDFDRNVAALRRSGGSVQGALDSLLNG).

The protein localises to the nucleus. In terms of biological role, involved, with RAD23 in spindle pole body duplication. Involved in the ubiquitin-proteasome proteolytic pathway. The protein is Ubiquitin domain-containing protein DSK2 (DSK2) of Saccharomyces cerevisiae (strain ATCC 204508 / S288c) (Baker's yeast).